We begin with the raw amino-acid sequence, 493 residues long: Ribonuclease Y (493 aa).

Residues 19–39 (IFAILFLIIVILNLGLLVFLA) form a helical membrane-spanning segment. The KH domain occupies 172 to 241 (SASFTVIESD…LTIRNILIND (70 aa)). An HD domain is found at 300-392 (VLSHCLETGF…TQIGDKLSAG (93 aa)).

This sequence belongs to the RNase Y family.

It is found in the cell membrane. Functionally, endoribonuclease that initiates mRNA decay. This Mycoplasma pneumoniae (strain ATCC 29342 / M129 / Subtype 1) (Mycoplasmoides pneumoniae) protein is Ribonuclease Y.